Consider the following 116-residue polypeptide: Host transcription reprogramming factor 4 (116 aa).

Residues Met-1–Gly-24 form the signal peptide. The tract at residues Gly-24–Arg-53 is disordered. A compositionally biased stretch (polar residues) spans Val-33 to Pro-47. A C2H2-type; degenerate zinc finger spans residues Phe-74–Phe-96.

It is found in the secreted. Its subcellular location is the host nucleus. In terms of biological role, probable secreted effector that translocates into the nuclei of host cells to reprogram the expression of targeted genes by binding on effector binding elements in rice. This chain is Host transcription reprogramming factor 4, found in Pyricularia oryzae (strain 70-15 / ATCC MYA-4617 / FGSC 8958) (Rice blast fungus).